The chain runs to 402 residues: Type II NADH:quinone oxidoreductase (402 aa).

FAD contacts are provided by residues Gly12 to Ala16, Asn39 to Lys40, and Val83. Residue Glu172 is part of the active site. FAD contacts are provided by residues Asp302, Ala319–Gln320, and Lys379.

Belongs to the NADH dehydrogenase family. The cofactor is FAD.

Its subcellular location is the cell membrane. The enzyme catalyses a quinone + NADH + H(+) = a quinol + NAD(+). Alternative, nonproton pumping NADH:quinone oxidoreductase that delivers electrons to the respiratory chain by oxidation of NADH and reduction of quinones, and contributes to the regeneration of NAD(+). In Staphylococcus haemolyticus (strain JCSC1435), this protein is Type II NADH:quinone oxidoreductase.